A 297-amino-acid chain; its full sequence is Salivary glue protein Sgs-4 (297 aa).

The signal sequence occupies residues 1–21 (MRLELLVVLLVGLAALAPSGS). Repeat copies occupy residues 26–32 (TEPPRCE), 33–39 (TEPPRCE), 40–46 (TEPPRCE), 47–53 (TEPPRCE), 54–60 (TEPPRCE), 61–67 (TTTPKCE), 68–74 (TTPPTCR), 75–81 (TEPPTCK), 82–88 (TEPPTCR), 89–95 (TEPPTCK), 96–102 (TKPPTCR), 103–109 (TEPPTCR), 110–116 (TEPPTCK), 117–123 (TKPPTCK), 124–130 (TEPPTCK), 131–137 (TEPPTCR), 138–144 (TEPPTCK), 145–151 (TEPPTCR), 152–158 (TEPPTCK), 159–165 (TEPPTCK), and 166–172 (TEPPTCK). The segment at 26 to 84 (TEPPRCETEPPRCETEPPRCETEPPRCETEPPRCETTTPKCETTPPTCRTEPPTCKTEP) is disordered. Residues 26–179 (TEPPRCETEP…TCKTEPPCEK (154 aa)) are 22 X 7 AA approximate tandem repeats of T-[ETK]-[PT]-P-[RKT]-C-[ERK]. A compositionally biased stretch (basic and acidic residues) spans 27 to 58 (EPPRCETEPPRCETEPPRCETEPPRCETEPPR). A compositionally biased stretch (low complexity) spans 59 to 84 (CETTTPKCETTPPTCRTEPPTCKTEP). The segment covering 141–174 (PTCKTEPPTCRTEPPTCKTEPPTCKTEPPTCKTE) has biased composition (low complexity). Disordered stretches follow at residues 141 to 218 (PTCK…SGCG) and 243 to 297 (PDSK…KGGC). The 22; approximate repeat unit spans residues 173–179 (TEPPCEK). Composition is skewed to basic residues over residues 181–208 (CTKR…HHNR) and 282–291 (NTTKKPRKTQ).

As to expression, salivary gland.

The protein resides in the secreted. This Drosophila melanogaster (Fruit fly) protein is Salivary glue protein Sgs-4 (Sgs4).